The sequence spans 215 residues: GTP-binding nuclear protein ran-1 (215 aa).

The region spanning 6 to 170 (GIPTFKLVLV…LWLARKLLGD (165 aa)) is the Small GTPase Ran-type domain. 17 to 24 (DGGTGKTT) contributes to the GTP binding site. The interval 36-44 (KKYVATLGV) is switch-I. GTP-binding positions include Gly67, 121–124 (NKVD), and 149–151 (SAK). The switch-II stretch occupies residues 67–83 (GQEKFGGLRDGYYIQGQ).

Belongs to the small GTPase superfamily. Ran family. As to quaternary structure, found in a nuclear export complex with RanGTP, exportin and pre-miRNA.

Its subcellular location is the nucleus. It is found in the chromosome. The protein localises to the centromere. The protein resides in the kinetochore. Functionally, ran GTPase system comprises ran-1, ran-2 and ran-3 and is essential in nucleocytoplasmic transport. Ran-1 is a GTP-binding protein that mediates the interaction between mitotic chromosomes and kinetochore microtubules. Plays a crucial role in nuclear envelope assembly at the end of each cell division. Required for the import of protein into the nucleus and also for RNA export. RCC1 (ran-3)/Ran (ran-1) complex (together with other proteins) acts as a component of a signal transmission pathway that detects unreplicated DNA. This is GTP-binding nuclear protein ran-1 (ran-1) from Caenorhabditis elegans.